A 232-amino-acid chain; its full sequence is Large ribosomal subunit protein uL1 (232 aa).

Belongs to the universal ribosomal protein uL1 family. As to quaternary structure, part of the 50S ribosomal subunit.

Its function is as follows. Binds directly to 23S rRNA. The L1 stalk is quite mobile in the ribosome, and is involved in E site tRNA release. Functionally, protein L1 is also a translational repressor protein, it controls the translation of the L11 operon by binding to its mRNA. This is Large ribosomal subunit protein uL1 from Maricaulis maris (strain MCS10) (Caulobacter maris).